Consider the following 273-residue polypeptide: Beta-lactamase OXA-23 (273 aa).

Residues 1–17 form the signal peptide; that stretch reads MNKYFTCYVVASLFLSG. Ser79 (acyl-ester intermediate) is an active-site residue. 6 residues coordinate a beta-lactam: Ser79, Lys82, Ser126, Thr217, Trp219, and Arg259. Position 82 is an N6-carboxylysine (Lys82).

The protein belongs to the class-D beta-lactamase family. Monomer. In terms of processing, carboxylated on the epsilon-amino group of a lysine, with the resulting carbamate functional group serving as a general base. Probably N-carboxylated at Lys-82 at neutral pH in vivo and undergoes complete N-decarboxylation, at pH 4.1, in vitro.

It localises to the periplasm. It carries out the reaction a beta-lactam + H2O = a substituted beta-amino acid. Its activity is regulated as follows. Inhibited by the desmethyl carbapenem, MA-1-206, via a covalent binding to Ser-79. Functionally, class D beta-lactamase which confers resistance to the beta-lactam antibiotics, including ampicillin, and carbapenems such as imipenem and meropenem. Acts via hydrolysis of the beta-lactam ring. Has penicillin-, cephalosporin- and carbapenem-hydrolyzing activities, but lacks ceftazidime-hydrolyzing activity. This Acinetobacter baumannii protein is Beta-lactamase OXA-23.